A 313-amino-acid polypeptide reads, in one-letter code: MRTLVTGAAGFIGSTLVDRLLADGHGVVGLDDLSSGRAENLHSAENSDKFEFVKADIVDADLTGLLAEFKPEVIFHLAAQISVKRSVDDPPFDATVNVVGTVRLAEAARLAGVRKVVHTSSGGSVYGTPPAYPTSEDMPVNPASPYAAGKVAGEVYLNMYRNLYDLDCSHIAPANVYGPRQDPHGEAGVVAIFSEALLAGRTTKIFGDGSDTRDYVFVDDVVDAFVRAGGPAGGGQRFNVGTGVETSTRELHTAIAGAVGAPDEPEFHPPRLGDLRRSRLDNTRAREVLGWQPQVALAEGIAKTVEFFRNKSQ.

NAD(+) is bound by residues 11-12 (FI), 31-36 (DDLSSG), 56-57 (DI), and 77-81 (LAAQI). Positions 121 and 146 each coordinate substrate. 2 residues coordinate NAD(+): tyrosine 146 and lysine 150. The active-site Proton acceptor is tyrosine 146. Substrate-binding positions include asparagine 175, 189–190 (VV), 204–206 (KIF), arginine 213, and 271–274 (RLGD).

It belongs to the NAD(P)-dependent epimerase/dehydratase family. As to quaternary structure, homodimer. Requires NAD(+) as cofactor.

It catalyses the reaction UDP-alpha-D-glucose = UDP-alpha-D-galactose. The protein operates within carbohydrate metabolism; galactose metabolism. Involved in the metabolism of galactose. Catalyzes the conversion of UDP-galactose (UDP-Gal) to UDP-glucose (UDP-Glc) through a mechanism involving the transient reduction of NAD. This chain is UDP-glucose 4-epimerase, found in Mycolicibacterium smegmatis (strain ATCC 700084 / mc(2)155) (Mycobacterium smegmatis).